The chain runs to 221 residues: MWSAGSGRAAGPALLGILLALSLSGGRAAKSDAGLVTCGSVLKLFNTQHRVRLHSHDIKYGSGSGQQSVTGVEASDDANSYWRIRGGTEGECPRGSPVRCGQAVRLTHVLTGKNLHTHHFPSPLTNNQEVSAFGEDGEGDDLDLWTVRCSGQHWEREAAVRFQHVGTSVFLSVTGEQYGSPIRGQHEVHGMASASAHNKWKAMEGIFIKPSPEAPGGHDEL.

Positions 1–28 (MWSAGSGRAAGPALLGILLALSLSGGRA) are cleaved as a signal peptide. MIR domains follow at residues 33–87 (AGLV…IRGG), 95–150 (GSPV…VRCS), and 151–205 (GQHW…AMEG). Positions 218-221 (HDEL) match the Prevents secretion from ER motif.

It is found in the endoplasmic reticulum lumen. The protein is Stromal cell-derived factor 2-like protein 1 (SDF2L1) of Bos taurus (Bovine).